The chain runs to 157 residues: 2-C-methyl-D-erythritol 2,4-cyclodiphosphate synthase (157 aa).

A divalent metal cation contacts are provided by D9 and H11. Residues 9-11 and 35-36 contribute to the 4-CDP-2-C-methyl-D-erythritol 2-phosphate site; these read DVH and HS. Residue H43 participates in a divalent metal cation binding. Residues 57 to 59, F140, and R143 each bind 4-CDP-2-C-methyl-D-erythritol 2-phosphate; that span reads DIG.

This sequence belongs to the IspF family. Homotrimer. A divalent metal cation is required as a cofactor.

The enzyme catalyses 4-CDP-2-C-methyl-D-erythritol 2-phosphate = 2-C-methyl-D-erythritol 2,4-cyclic diphosphate + CMP. It participates in isoprenoid biosynthesis; isopentenyl diphosphate biosynthesis via DXP pathway; isopentenyl diphosphate from 1-deoxy-D-xylulose 5-phosphate: step 4/6. In terms of biological role, involved in the biosynthesis of isopentenyl diphosphate (IPP) and dimethylallyl diphosphate (DMAPP), two major building blocks of isoprenoid compounds. Catalyzes the conversion of 4-diphosphocytidyl-2-C-methyl-D-erythritol 2-phosphate (CDP-ME2P) to 2-C-methyl-D-erythritol 2,4-cyclodiphosphate (ME-CPP) with a corresponding release of cytidine 5-monophosphate (CMP). This chain is 2-C-methyl-D-erythritol 2,4-cyclodiphosphate synthase, found in Caldicellulosiruptor bescii (strain ATCC BAA-1888 / DSM 6725 / KCTC 15123 / Z-1320) (Anaerocellum thermophilum).